The following is a 352-amino-acid chain: Phosphoribosylformylglycinamidine cyclo-ligase (352 aa).

The protein belongs to the AIR synthase family.

The protein localises to the cytoplasm. It catalyses the reaction 2-formamido-N(1)-(5-O-phospho-beta-D-ribosyl)acetamidine + ATP = 5-amino-1-(5-phospho-beta-D-ribosyl)imidazole + ADP + phosphate + H(+). It participates in purine metabolism; IMP biosynthesis via de novo pathway; 5-amino-1-(5-phospho-D-ribosyl)imidazole from N(2)-formyl-N(1)-(5-phospho-D-ribosyl)glycinamide: step 2/2. The polypeptide is Phosphoribosylformylglycinamidine cyclo-ligase (Pseudomonas fluorescens (strain Pf0-1)).